We begin with the raw amino-acid sequence, 635 residues long: DNA mismatch repair protein MutL (635 aa).

It belongs to the DNA mismatch repair MutL/HexB family.

This protein is involved in the repair of mismatches in DNA. It is required for dam-dependent methyl-directed DNA mismatch repair. May act as a 'molecular matchmaker', a protein that promotes the formation of a stable complex between two or more DNA-binding proteins in an ATP-dependent manner without itself being part of a final effector complex. In Yersinia pestis bv. Antiqua (strain Angola), this protein is DNA mismatch repair protein MutL.